The chain runs to 232 residues: uncharacterized protein (232 aa).

Residues Glu89–Asp140 adopt a coiled-coil conformation.

This is an uncharacterized protein from Mycobacterium leprae (strain TN).